We begin with the raw amino-acid sequence, 258 residues long: Phosphonates import ATP-binding protein PhnC 3 (258 aa).

The ABC transporter domain maps to 2-246 (IEFKNVSLVY…TFEEIYGRKI (245 aa)). 35-42 (GLSGAGKS) serves as a coordination point for ATP.

Belongs to the ABC transporter superfamily. Phosphonates importer (TC 3.A.1.9.1) family. In terms of assembly, the complex is composed of two ATP-binding proteins (PhnC), two transmembrane proteins (PhnE) and a solute-binding protein (PhnD).

It localises to the cell membrane. The enzyme catalyses phosphonate(out) + ATP + H2O = phosphonate(in) + ADP + phosphate + H(+). Functionally, part of the ABC transporter complex PhnCDE involved in phosphonates import. Responsible for energy coupling to the transport system. The polypeptide is Phosphonates import ATP-binding protein PhnC 3 (Halalkalibacterium halodurans (strain ATCC BAA-125 / DSM 18197 / FERM 7344 / JCM 9153 / C-125) (Bacillus halodurans)).